The sequence spans 423 residues: Glucuronoxylanase XynC (423 aa).

An N-terminal signal peptide occupies residues 1–33 (MMSSVKKTICVLLVCFTMMSVMLLGPGVTEVSA). Catalysis depends on glutamate 172, which acts as the Proton donor. Residue glutamate 261 is the Nucleophile of the active site.

The protein belongs to the glycosyl hydrolase 30 family.

It is found in the secreted. The catalysed reaction is Endohydrolysis of (1-&gt;4)-beta-D-xylosyl links in some glucuronoarabinoxylans.. The protein operates within glycan degradation; xylan degradation. Its function is as follows. Catalyzes the depolymerization of methylglucuronoxylan (MeGAXn). It cleaves the beta-1,4-xylosidic bond penultimate to that linking carbon one of the xylose residue substituted with alpha-1,2-linked 4-O-methyl-D-glucuronate (MeGA). The protein is Glucuronoxylanase XynC (xynC) of Bacillus subtilis.